We begin with the raw amino-acid sequence, 383 residues long: Probable butyrate kinase (383 aa).

Belongs to the acetokinase family.

It localises to the cytoplasm. The catalysed reaction is butanoate + ATP = butanoyl phosphate + ADP. In Deinococcus radiodurans (strain ATCC 13939 / DSM 20539 / JCM 16871 / CCUG 27074 / LMG 4051 / NBRC 15346 / NCIMB 9279 / VKM B-1422 / R1), this protein is Probable butyrate kinase.